The chain runs to 163 residues: Myosin light chain 2 (163 aa).

2 EF-hand domains span residues 15-50 and 92-127; these read DYIN…LGKT and PERE…AGFE. Positions 28, 30, 32, and 39 each coordinate Ca(2+).

As to quaternary structure, interacts with the IQ domain of MYO1.

The protein resides in the bud neck. Regulatory light chain for the class II conventional myosin MYO1. May play a role in the disassembly of the MYO1 ring at the bud neck at the end of its contraction during cytokinesis. The chain is Myosin light chain 2 (MLC2) from Saccharomyces cerevisiae (strain ATCC 204508 / S288c) (Baker's yeast).